We begin with the raw amino-acid sequence, 261 residues long: Imidazole glycerol phosphate synthase subunit HisF (261 aa).

Active-site residues include Asp-16 and Asp-135.

Belongs to the HisA/HisF family. Heterodimer of HisH and HisF.

The protein localises to the cytoplasm. It carries out the reaction 5-[(5-phospho-1-deoxy-D-ribulos-1-ylimino)methylamino]-1-(5-phospho-beta-D-ribosyl)imidazole-4-carboxamide + L-glutamine = D-erythro-1-(imidazol-4-yl)glycerol 3-phosphate + 5-amino-1-(5-phospho-beta-D-ribosyl)imidazole-4-carboxamide + L-glutamate + H(+). The protein operates within amino-acid biosynthesis; L-histidine biosynthesis; L-histidine from 5-phospho-alpha-D-ribose 1-diphosphate: step 5/9. In terms of biological role, IGPS catalyzes the conversion of PRFAR and glutamine to IGP, AICAR and glutamate. The HisF subunit catalyzes the cyclization activity that produces IGP and AICAR from PRFAR using the ammonia provided by the HisH subunit. This is Imidazole glycerol phosphate synthase subunit HisF from Mycobacterium leprae (strain Br4923).